We begin with the raw amino-acid sequence, 87 residues long: Small ribosomal subunit protein bS20 (87 aa).

The disordered stretch occupies residues 1–25 (MANIKSAKKRAVQSEKHRLHNASRR).

Belongs to the bacterial ribosomal protein bS20 family.

Binds directly to 16S ribosomal RNA. This is Small ribosomal subunit protein bS20 from Baumannia cicadellinicola subsp. Homalodisca coagulata.